The following is a 428-amino-acid chain: Chaperone SurA (428 aa).

Residues 1-20 form the signal peptide; the sequence is MKNWKTLLLGIAMIANTSFA. PpiC domains are found at residues 171-272 and 282-382; these read STEL…KVND and VTEV…ELLD.

The protein localises to the periplasm. The enzyme catalyses [protein]-peptidylproline (omega=180) = [protein]-peptidylproline (omega=0). Functionally, chaperone involved in the correct folding and assembly of outer membrane proteins. Recognizes specific patterns of aromatic residues and the orientation of their side chains, which are found more frequently in integral outer membrane proteins. May act in both early periplasmic and late outer membrane-associated steps of protein maturation. The chain is Chaperone SurA from Salmonella paratyphi A (strain ATCC 9150 / SARB42).